The primary structure comprises 448 residues: Probable glycine dehydrogenase (decarboxylating) subunit 1 (448 aa).

The protein belongs to the GcvP family. N-terminal subunit subfamily. The glycine cleavage system is composed of four proteins: P, T, L and H. In this organism, the P 'protein' is a heterodimer of two subunits.

It carries out the reaction N(6)-[(R)-lipoyl]-L-lysyl-[glycine-cleavage complex H protein] + glycine + H(+) = N(6)-[(R)-S(8)-aminomethyldihydrolipoyl]-L-lysyl-[glycine-cleavage complex H protein] + CO2. In terms of biological role, the glycine cleavage system catalyzes the degradation of glycine. The P protein binds the alpha-amino group of glycine through its pyridoxal phosphate cofactor; CO(2) is released and the remaining methylamine moiety is then transferred to the lipoamide cofactor of the H protein. The chain is Probable glycine dehydrogenase (decarboxylating) subunit 1 from Parvibaculum lavamentivorans (strain DS-1 / DSM 13023 / NCIMB 13966).